The following is a 570-amino-acid chain: Proline--tRNA ligase (570 aa).

It belongs to the class-II aminoacyl-tRNA synthetase family. ProS type 1 subfamily. Homodimer.

It localises to the cytoplasm. The catalysed reaction is tRNA(Pro) + L-proline + ATP = L-prolyl-tRNA(Pro) + AMP + diphosphate. Catalyzes the attachment of proline to tRNA(Pro) in a two-step reaction: proline is first activated by ATP to form Pro-AMP and then transferred to the acceptor end of tRNA(Pro). As ProRS can inadvertently accommodate and process non-cognate amino acids such as alanine and cysteine, to avoid such errors it has two additional distinct editing activities against alanine. One activity is designated as 'pretransfer' editing and involves the tRNA(Pro)-independent hydrolysis of activated Ala-AMP. The other activity is designated 'posttransfer' editing and involves deacylation of mischarged Ala-tRNA(Pro). The misacylated Cys-tRNA(Pro) is not edited by ProRS. In Shewanella pealeana (strain ATCC 700345 / ANG-SQ1), this protein is Proline--tRNA ligase.